A 465-amino-acid chain; its full sequence is Mothers against decapentaplegic homolog 1 (465 aa).

An MH1 domain is found at 12–136 (PAVKRLLGWK…YKRVESPVLP (125 aa)). Residues Cys64, Cys109, Cys121, and His126 each contribute to the Zn(2+) site. Residues 161–240 (QNEPHMPHNA…EDQMTHDTSQ (80 aa)) are disordered. The segment covering 179–210 (PNSHPFPHSPNSSYPNSPGSSSSTYPHSPASS) has biased composition (low complexity). The MH2 domain occupies 271 to 465 (WCSIVYYELN…SPHNPISSVS (195 aa)). Phosphoserine occurs at positions 463 and 465.

Belongs to the dwarfin/SMAD family. As to quaternary structure, found in a complex with SMAD4 and YY1. Interacts with HGS, NANOG and ZCCHC12. Upon C-terminus phosphorylation: forms trimers with another SMAD1 and the co-SMAD SMAD4. Interacts with PEBP2-alpha subunit, CREB-binding protein (CBP), p300, SMURF1, SMURF2, USP15 and HOXC8. Associates with ZNF423 or ZNF521 in response to BMP2 leading to activate transcription of BMP target genes. Interacts with SKOR1. Interacts (via MH2 domain) with LEMD3. Binding to LEMD3 results in at least a partial reduction of receptor-mediated phosphorylation. Forms a ternary complex with PSMB4 and OAZ1 before PSMB4 is incorporated into the 20S proteasome. Found in a macromolecular complex with FAM83G. Interacts (via MH2 domain) with FAM83G (via MH2 domain); in a SMAD4-independent manner. Interacts with ZC3H3. Interacts with TMEM119. Interacts (via MH1 and MH2 domains) with ZNF8. Interacts with RANBP3L; the interaction increases when SMAD1 is not phosphorylated and mediates SMAD1 nuclear export. Interacts with EGR1; this interaction inhibits SMAD1 dephosphorylation. Interacts with SMAD6. Interacts with YAP1. Phosphorylation of the C-terminal SVS motif by BMP type 1 receptor kinase activates SMAD1 by promoting dissociation from the receptor and trimerization with SMAD4. Phosphorylation by ERK2 MAP kinase in response to EGF or HGF prevents SMAD1 nuclear accumulation and transcriptional activity in response to BMP. Dephosphorylation, probably by PPM1A, induces its export from the nucleus to the cytoplasm. Dephosphorylation is inhibited by association with EGR1. Phosphorylation by CDK8/9 creates binding sites for YAP1, and subsequent phosphorylation by GSK3 switches off YAP1 binding and adds binding sites for SMURF1. In terms of processing, ubiquitinated by SMAD-specific E3 ubiquitin ligase SMURF1, leading to its degradation. Monoubiquitinated, leading to prevent DNA-binding. Deubiquitination by USP15 alleviates inhibition and promotes activation of TGF-beta target genes. Dephosphorylation, probably by PPM1A, induces its export from the nucleus to the cytoplasm. Phospho-SMAD1 is ubiquitinated by CHIP leading to disruption of the SMAD1-SMAD4 complex.

Its subcellular location is the cytoplasm. The protein resides in the nucleus. Transcriptional modulator that plays a role in various cellular processes, including embryonic development, cell differentiation, and tissue homeostasis. Upon BMP ligand binding to their receptors at the cell surface, is phosphorylated by activated type I BMP receptors (BMPRIs) and associates with SMAD4 to form an heteromeric complex which translocates into the nucleus acting as transcription factor. In turn, the hetero-trimeric complex recognizes cis-regulatory elements containing Smad Binding Elements (SBEs) to modulate the outcome of the signaling network. SMAD1/OAZ1/PSMB4 complex mediates the degradation of the CREBBP/EP300 repressor SNIP1. The protein is Mothers against decapentaplegic homolog 1 (SMAD1) of Coturnix japonica (Japanese quail).